A 236-amino-acid chain; its full sequence is Pyridoxal 5'-phosphate synthase subunit PdxT (236 aa).

61-63 (GES) contacts L-glutamine. The Nucleophile role is filled by C93. L-glutamine contacts are provided by residues R127 and 163-164 (IR). Catalysis depends on charge relay system residues H215 and E217.

The protein belongs to the glutaminase PdxT/SNO family. In the presence of PdxS, forms a dodecamer of heterodimers. Only shows activity in the heterodimer.

It carries out the reaction aldehydo-D-ribose 5-phosphate + D-glyceraldehyde 3-phosphate + L-glutamine = pyridoxal 5'-phosphate + L-glutamate + phosphate + 3 H2O + H(+). The enzyme catalyses L-glutamine + H2O = L-glutamate + NH4(+). The protein operates within cofactor biosynthesis; pyridoxal 5'-phosphate biosynthesis. Functionally, catalyzes the hydrolysis of glutamine to glutamate and ammonia as part of the biosynthesis of pyridoxal 5'-phosphate. The resulting ammonia molecule is channeled to the active site of PdxS. The protein is Pyridoxal 5'-phosphate synthase subunit PdxT of Pseudarthrobacter chlorophenolicus (strain ATCC 700700 / DSM 12829 / CIP 107037 / JCM 12360 / KCTC 9906 / NCIMB 13794 / A6) (Arthrobacter chlorophenolicus).